A 340-amino-acid chain; its full sequence is Diacylglycerol acyltransferase/mycolyltransferase Ag85C (340 aa).

The signal sequence occupies residues 1–45 (MTFFEQVRRLRSAATTLPRRLAIAAMGAVLVYGLVGTFGGPATAG). 86–87 (LR) is a substrate binding site. The interval 102-112 (FEEYYQSGLSV) is fibronectin-binding. Residues Ser-170 and Asn-198 each contribute to the substrate site. Ser-170 functions as the Nucleophile in the catalytic mechanism. Residue Glu-274 is part of the active site. Substrate contacts are provided by residues 276 to 279 (LTLR) and 306 to 308 (HSW). His-306 is a catalytic residue.

Belongs to the mycobacterial A85 antigen family. Homodimer.

It is found in the secreted. It catalyses the reaction an acyl-CoA + a 1,2-diacyl-sn-glycerol = a triacyl-sn-glycerol + CoA. It carries out the reaction 2 alpha,alpha'-trehalose 6-mycolate = alpha,alpha'-trehalose 6,6'-bismycolate + alpha,alpha-trehalose. The antigen 85 proteins (FbpA, FbpB, FbpC) are responsible for the high affinity of mycobacteria to fibronectin, a large adhesive glycoprotein, which facilitates the attachment of M.tuberculosis to murine alveolar macrophages (AMs). They also help to maintain the integrity of the cell wall by catalyzing the transfer of mycolic acids to cell wall arabinogalactan and through the synthesis of alpha,alpha-trehalose dimycolate (TDM, cord factor). They catalyze the transfer of a mycoloyl residue from one molecule of alpha,alpha-trehalose monomycolate (TMM) to another TMM, leading to the formation of TDM. The chain is Diacylglycerol acyltransferase/mycolyltransferase Ag85C (fbpC) from Mycobacterium bovis (strain ATCC BAA-935 / AF2122/97).